The sequence spans 93 residues: UPF0223 protein YfdD (93 aa).

The protein belongs to the UPF0223 family.

The chain is UPF0223 protein YfdD (yfdD) from Lactococcus lactis subsp. lactis (strain IL1403) (Streptococcus lactis).